A 475-amino-acid chain; its full sequence is Ribulose bisphosphate carboxylase large chain (475 aa).

A propeptide spanning residues 1–2 (MA) is cleaved from the precursor. Pro-3 is subject to N-acetylproline. Substrate is bound by residues Asn-123 and Thr-173. The Proton acceptor role is filled by Lys-175. Lys-177 contributes to the substrate binding site. Residues Lys-201, Asp-203, and Glu-204 each coordinate Mg(2+). The residue at position 201 (Lys-201) is an N6-carboxylysine. Residue His-294 is the Proton acceptor of the active site. 3 residues coordinate substrate: Arg-295, His-327, and Ser-379.

Belongs to the RuBisCO large chain family. Type I subfamily. As to quaternary structure, heterohexadecamer of 8 large chains and 8 small chains. Mg(2+) serves as cofactor.

Its subcellular location is the plastid. The protein localises to the chloroplast. The catalysed reaction is 2 (2R)-3-phosphoglycerate + 2 H(+) = D-ribulose 1,5-bisphosphate + CO2 + H2O. The enzyme catalyses D-ribulose 1,5-bisphosphate + O2 = 2-phosphoglycolate + (2R)-3-phosphoglycerate + 2 H(+). Its function is as follows. RuBisCO catalyzes two reactions: the carboxylation of D-ribulose 1,5-bisphosphate, the primary event in carbon dioxide fixation, as well as the oxidative fragmentation of the pentose substrate in the photorespiration process. Both reactions occur simultaneously and in competition at the same active site. The sequence is that of Ribulose bisphosphate carboxylase large chain from Ostreococcus tauri.